Here is a 425-residue protein sequence, read N- to C-terminus: ATP-dependent RNA helicase eIF4A (425 aa).

Positions 38–66 (DTWEDYGLKEDLLKGIYSIGFETPSFIQK) match the Q motif motif. Positions 69–241 (IQPIIDGRDI…EEILINPVII (173 aa)) constitute a Helicase ATP-binding domain. 82–89 (AQSGTGKT) contributes to the ATP binding site. The short motif at 187–190 (DEAD) is the DEAD box element. The Helicase C-terminal domain occupies 252 to 425 (GIRQYFIDLR…KELPADFSFQ (174 aa)).

It belongs to the DEAD box helicase family. eIF4A subfamily. In terms of assembly, component of the eIF4F complex, which composition varies with external and internal environmental conditions. It is composed of at least eIF4A, eIF4E and eIF4G.

It is found in the cytoplasm. It catalyses the reaction ATP + H2O = ADP + phosphate + H(+). Its function is as follows. ATP-dependent RNA helicase which is a subunit of the eIF4F complex involved in cap recognition and is required for mRNA binding to ribosome. In the current model of translation initiation, eIF4A unwinds RNA secondary structures in the 5'-UTR of mRNAs which is necessary to allow efficient binding of the small ribosomal subunit, and subsequent scanning for the initiator codon. The sequence is that of ATP-dependent RNA helicase eIF4A (TIF1) from Encephalitozoon cuniculi (strain GB-M1) (Microsporidian parasite).